The sequence spans 853 residues: DNA (cytosine-5)-methyltransferase 3B (853 aa).

Basic and acidic residues predominate over residues 1 to 20 (MKGDTRHLNGEEDAGGREDS). Residues 1–218 (MKGDTRHLNG…SGDGDSSEYQ (218 aa)) form a disordered region. Positions 1-298 (MKGDTRHLNG…LATFNKLVSY (298 aa)) are interaction with DNMT1 and DNMT3A. The span at 72 to 81 (GDGDGEDGDG) shows a compositional bias: acidic residues. Residue S82 is modified to Phosphoserine. A Glycyl lysine isopeptide (Lys-Gly) (interchain with G-Cter in SUMO2) cross-link involves residue K89. T96 carries the phosphothreonine modification. Phosphoserine is present on residues S100 and S110. Positions 115–130 (ERHRPSPRSTRGRQGR) are enriched in basic residues. A phosphoserine mark is found at S136, S195, S202, and S209. The segment covering 179 to 199 (GTPQSSSTPYARLAQDSQQGG) has biased composition (polar residues). The PWWP domain maps to 225–283 (IGDLVWGKIKGFSWWPAMVVSWKATSKRQAMSGMRWVQWFGDGKFSEVSADKLVALGLF). The disordered stretch occupies residues 341–423 (KPTGIEGLKP…DQSREQMASD (83 aa)). Composition is skewed to basic and acidic residues over residues 368 to 385 (RKLESRKYENKTRRRTAD) and 407 to 417 (GKDRGDEDQSR). Residue R410 is modified to Citrulline. Positions 423–555 (DVANNKSSLE…LQAFFTSDTG (133 aa)) constitute an ADD domain. Residues 434–464 (GCLSCGRKNPVSFHPLFEGGLCQTCRDRFLE) form a GATA-type; atypical zinc finger. The segment at 435–527 (CLSCGRKNPV…LQEPWSCYMC (93 aa)) is interaction with the PRC2/EED-EZH2 complex. The segment at 475–531 (QSYCTVCCEGRELLLCSNTSCCRCFCVECLEVLVGTGTAAEAKLQEPWSCYMCLPQR) adopts a PHD-type; atypical zinc-finger fold. Residues 575-853 (IRVLSLFDGI…APLKDYFACE (279 aa)) form the SAM-dependent MTase C5-type domain. S-adenosyl-L-methionine is bound by residues 582–586 (DGIAT) and E605. K617 is covalently cross-linked (Glycyl lysine isopeptide (Lys-Gly) (interchain with G-Cter in SUMO2)). 627–629 (DVR) contributes to the S-adenosyl-L-methionine binding site. C651 is a catalytic residue. 832-834 (RSW) contributes to the S-adenosyl-L-methionine binding site.

It belongs to the class I-like SAM-binding methyltransferase superfamily. C5-methyltransferase family. Interacts with BAZ2A/TIP5, SUV39H1 and CBX4. Interacts with UHRF1. Interacts with DNMT1 and DNMT3A, SETDB1, UBL1, UBE2I9 and ZHX1. Interacts with the PRC2/EED-EZH2 complex. In terms of processing, sumoylated. Citrullinated by PADI4. As to expression, ubiquitous; highly expressed in fetal liver, heart, kidney, placenta, and at lower levels in spleen, colon, brain, liver, small intestine, lung, peripheral blood mononuclear cells, and skeletal muscle. Isoform 1 is expressed in all tissues except brain, skeletal muscle and PBMC, 3 is ubiquitous, 4 is expressed in all tissues except brain, skeletal muscle, lung and prostate and 5 is detectable only in testis and at very low level in brain and prostate.

The protein localises to the nucleus. The catalysed reaction is a 2'-deoxycytidine in DNA + S-adenosyl-L-methionine = a 5-methyl-2'-deoxycytidine in DNA + S-adenosyl-L-homocysteine + H(+). Activated by binding to the regulatory factor DNMT3L. Required for genome-wide de novo methylation and is essential for the establishment of DNA methylation patterns during development. DNA methylation is coordinated with methylation of histones. May preferentially methylates nucleosomal DNA within the nucleosome core region. May function as transcriptional co-repressor by associating with CBX4 and independently of DNA methylation. Seems to be involved in gene silencing. In association with DNMT1 and via the recruitment of CTCFL/BORIS, involved in activation of BAG1 gene expression by modulating dimethylation of promoter histone H3 at H3K4 and H3K9. Isoforms 4 and 5 are probably not functional due to the deletion of two conserved methyltransferase motifs. Functions as a transcriptional corepressor by associating with ZHX1. Required for DUX4 silencing in somatic cells. This Homo sapiens (Human) protein is DNA (cytosine-5)-methyltransferase 3B (DNMT3B).